We begin with the raw amino-acid sequence, 111 residues long: Ig kappa chain V-III region PC 2413 (111 aa).

The framework-1 stretch occupies residues 1–23 (DIVLTQSPASLAVSLGQRATISC). Cys-23 and Cys-92 are disulfide-bonded. The complementarity-determining-1 stretch occupies residues 24–38 (RASESVVNYGVSLMH). The interval 39–53 (WFQQKPGQPPKLLIY) is framework-2. The interval 54–60 (GASNRGS) is complementarity-determining-2. Residues 61–92 (GVPARFSGSGSGTDFSLIIHPMEEDDSAMYFC) form a framework-3 region. The complementarity-determining-3 stretch occupies residues 93–101 (HQTKEVPWT). Residues 102 to 111 (FGGGTDLEIE) form a framework-4 region.

The protein is Ig kappa chain V-III region PC 2413 of Mus musculus (Mouse).